Here is a 209-residue protein sequence, read N- to C-terminus: Uridine kinase (209 aa).

16 to 23 (GGSGSGKT) lines the ATP pocket.

This sequence belongs to the uridine kinase family.

Its subcellular location is the cytoplasm. The enzyme catalyses uridine + ATP = UMP + ADP + H(+). It carries out the reaction cytidine + ATP = CMP + ADP + H(+). Its pathway is pyrimidine metabolism; CTP biosynthesis via salvage pathway; CTP from cytidine: step 1/3. It participates in pyrimidine metabolism; UMP biosynthesis via salvage pathway; UMP from uridine: step 1/1. The protein is Uridine kinase of Lactiplantibacillus plantarum (strain ATCC BAA-793 / NCIMB 8826 / WCFS1) (Lactobacillus plantarum).